The chain runs to 91 residues: B3 domain-containing protein Os03g0164300 (91 aa).

Residues 1-91 constitute a DNA-binding region (TF-B3); that stretch reads MTNAKMTFAV…VLVLKVHVLK (91 aa).

It localises to the nucleus. This is B3 domain-containing protein Os03g0164300 from Oryza sativa subsp. japonica (Rice).